We begin with the raw amino-acid sequence, 354 residues long: 3-dehydroquinate synthase (354 aa).

NAD(+) contacts are provided by residues 100-104, 124-125, K136, K145, and 163-166; these read GATGD, TT, and FLKT. Residues E178, H242, and H256 each coordinate Zn(2+).

This sequence belongs to the sugar phosphate cyclases superfamily. Dehydroquinate synthase family. It depends on NAD(+) as a cofactor. Co(2+) serves as cofactor. Requires Zn(2+) as cofactor.

Its subcellular location is the cytoplasm. The enzyme catalyses 7-phospho-2-dehydro-3-deoxy-D-arabino-heptonate = 3-dehydroquinate + phosphate. Its pathway is metabolic intermediate biosynthesis; chorismate biosynthesis; chorismate from D-erythrose 4-phosphate and phosphoenolpyruvate: step 2/7. Functionally, catalyzes the conversion of 3-deoxy-D-arabino-heptulosonate 7-phosphate (DAHP) to dehydroquinate (DHQ). The chain is 3-dehydroquinate synthase from Staphylococcus aureus (strain COL).